The following is a 678-amino-acid chain: MVPSTFSRLKAARCLPVVLAALIFAGCGTHTPDQSTAYMQGTAQADSAFYLQQMQQSSDDTRINWQLLAIRALVKEGKTGQAVELFNQLPQELNDTQRREKTLLAAEIKLAQKDFAGAQNLLAKITPADLEQNQQARYWQAKIDASQGRPSIDLLRALIAQEPLLGAKEKQQNIDATWQALSSMTQEQANTLVINADENILQGWLDLQRVWFDNRNDPDMMKAGIADWQKRYPNNPGAKMLPTQLVNVKAFKPASTNKIALLLPLNGQAAVFGRTIQQGFEAAKNIGTQPVVAQVAAAPAADVAEQPQPQTVDGVASPAQASVSDLTGEQPAAQSVPVSAPATSTAAVSAPANPSAELKIYDTSSQPLSQILSQVQQDGASIVVGPLLKNNVEELLKSNTPLNVLALNQPENIENRVNICYFALSPEDEARDAARHIRDQGKQAPLVLIPRSSLGDRVANAFAQEWQKLGGGTVLQQKFGSTSELRAGVNGGSGIALTGSPITPRETTDSGMTTNNPTLQTTPTDDQFTNNGGRVDAVYIVATPGEIAFIKPMIAMRNGSQSGATLYASSRSAQGTAGPDFRLEMEGLQYSEIPMLAGGNLPLMQQALSAVNNDYSLARMYAMGVDAWSLANHFSQMRQVQGFEINGNTGSLTANPDCVINRKLSWLQYQQGQVVPAS.

Residues 1-26 (MVPSTFSRLKAARCLPVVLAALIFAG) form the signal peptide. Cysteine 27 carries N-palmitoyl cysteine lipidation. Cysteine 27 carries the S-diacylglycerol cysteine lipid modification. Disordered regions lie at residues 304–338 (AEQP…SVPV) and 495–530 (IALT…QFTN). A compositionally biased stretch (low complexity) spans 513 to 529 (TTNNPTLQTTPTDDQFT).

Belongs to the LpoA family. Interacts with PBP1a.

It localises to the cell outer membrane. Functionally, regulator of peptidoglycan synthesis that is essential for the function of penicillin-binding protein 1A (PBP1a). In Escherichia coli O6:H1 (strain CFT073 / ATCC 700928 / UPEC), this protein is Penicillin-binding protein activator LpoA.